Here is a 491-residue protein sequence, read N- to C-terminus: Probable CtpA-like serine protease (491 aa).

The segment at 1–22 (MNDHQKNHATSQDDNTKSTPSK) is disordered. Positions 8–22 (HATSQDDNTKSTPSK) are enriched in polar residues. A helical transmembrane segment spans residues 31–51 (LWHFILVILGIILLTSIITVV). One can recognise a PDZ domain in the interval 119 to 201 (TKQFNEGVSG…TYVTLTIKRG (83 aa)). Active-site charge relay system residues include Ser324, Asp335, and Lys349.

This sequence belongs to the peptidase S41A family.

It localises to the cell membrane. This chain is Probable CtpA-like serine protease, found in Staphylococcus epidermidis (strain ATCC 12228 / FDA PCI 1200).